A 311-amino-acid polypeptide reads, in one-letter code: 4-diphosphocytidyl-2-C-methyl-D-erythritol kinase (311 aa).

Lys16 is a catalytic residue. 100–110 (PIGAGLAGGSS) contacts ATP. Residue Asp142 is part of the active site.

The protein belongs to the GHMP kinase family. IspE subfamily.

It carries out the reaction 4-CDP-2-C-methyl-D-erythritol + ATP = 4-CDP-2-C-methyl-D-erythritol 2-phosphate + ADP + H(+). It functions in the pathway isoprenoid biosynthesis; isopentenyl diphosphate biosynthesis via DXP pathway; isopentenyl diphosphate from 1-deoxy-D-xylulose 5-phosphate: step 3/6. In terms of biological role, catalyzes the phosphorylation of the position 2 hydroxy group of 4-diphosphocytidyl-2C-methyl-D-erythritol. This chain is 4-diphosphocytidyl-2-C-methyl-D-erythritol kinase, found in Prochlorococcus marinus (strain MIT 9215).